The chain runs to 48 residues: uncharacterized protein (48 aa).

Positions 1–48 (MLFCNNNNNNNNNNNNNNNNNNNNNNNNNNNNNNNNNNNSSNNNNFSR) are disordered.

This is an uncharacterized protein from Dictyostelium discoideum (Social amoeba).